Reading from the N-terminus, the 485-residue chain is Glutamate--tRNA ligase (485 aa).

A 'HIGH' region motif is present at residues 11–21 (PSPTGYMHVGN). Zn(2+)-binding residues include Cys108, Cys110, Cys135, and Asp137. Positions 252 to 256 (KLSKR) match the 'KMSKS' region motif. Lys255 is a binding site for ATP.

This sequence belongs to the class-I aminoacyl-tRNA synthetase family. Glutamate--tRNA ligase type 1 subfamily. Monomer. The cofactor is Zn(2+).

It is found in the cytoplasm. The enzyme catalyses tRNA(Glu) + L-glutamate + ATP = L-glutamyl-tRNA(Glu) + AMP + diphosphate. In terms of biological role, catalyzes the attachment of glutamate to tRNA(Glu) in a two-step reaction: glutamate is first activated by ATP to form Glu-AMP and then transferred to the acceptor end of tRNA(Glu). This Clostridium botulinum (strain Okra / Type B1) protein is Glutamate--tRNA ligase.